Reading from the N-terminus, the 288-residue chain is UTP--glucose-1-phosphate uridylyltransferase (288 aa).

Belongs to the UDPGP type 2 family.

The enzyme catalyses alpha-D-glucose 1-phosphate + UTP + H(+) = UDP-alpha-D-glucose + diphosphate. It participates in glycolipid metabolism; diglucosyl-diacylglycerol biosynthesis. Its function is as follows. Catalyzes the formation of UDP-glucose from glucose-1-phosphate and UTP. This is an intermediate step in the biosynthesis of diglucosyl-diacylglycerol (Glc2-DAG), i.e. a glycolipid found in the membrane, which is also used as a membrane anchor for lipoteichoic acid (LTA). The polypeptide is UTP--glucose-1-phosphate uridylyltransferase (gtaB) (Staphylococcus epidermidis (strain ATCC 35984 / DSM 28319 / BCRC 17069 / CCUG 31568 / BM 3577 / RP62A)).